A 497-amino-acid polypeptide reads, in one-letter code: tRNA (adenine(58)-N(1))-methyltransferase non-catalytic subunit TRM6 (497 aa).

A disordered region spans residues 81-103; the sequence is LEEPASETKEAGTDNRNIVDDGK. The interval 95–105 is substrate; that stretch reads NRNIVDDGKSQ. Threonine 108 bears the Phosphothreonine mark. Substrate regions lie at residues 146-155 and 176-183; these read KYIKKKKKKY and REPGKINH. A disordered region spans residues 275–354; it reads MLSSEPKDST…EKQRRQEEQR (80 aa). Positions 289–307 are enriched in acidic residues; it reads SNGELEEKEIAEQADEDNI. Residues 328 to 354 are compositionally biased toward basic and acidic residues; it reads PENKEPKEKRSKRDYIQEKQRRQEEQR. Substrate is bound by residues arginine 349 and arginine 377. 2 substrate regions span residues 415 to 423 and 434 to 441; these read RERGGVINL and QVLPDRSH. The interval 474–497 is disordered; that stretch reads TGALDPHKAEEPAAKKQKCMESAS. Residues 478–487 are compositionally biased toward basic and acidic residues; that stretch reads DPHKAEEPAA.

Belongs to the TRM6/GCD10 family. Heterotetramer; composed of two copies of TRMT6 and two copies of TRMT61A.

Its subcellular location is the nucleus. Substrate-binding subunit of tRNA (adenine-N(1)-)-methyltransferase, which catalyzes the formation of N(1)-methyladenine at position 58 (m1A58) in initiator methionyl-tRNA. Together with the TRMT61A catalytic subunit, part of a mRNA N(1)-methyltransferase complex that mediates methylation of adenosine residues at the N(1) position of a small subset of mRNAs: N(1) methylation takes place in tRNA T-loop-like structures of mRNAs and is only present at low stoichiometries. In Mus musculus (Mouse), this protein is tRNA (adenine(58)-N(1))-methyltransferase non-catalytic subunit TRM6 (Trmt6).